We begin with the raw amino-acid sequence, 326 residues long: Flap endonuclease 1 (326 aa).

Residues 1–100 (MGNAALRQLA…EEVQERRVAR (100 aa)) are N-domain. Residues Asp28, Asp82, Glu154, Glu156, Asp175, Asp177, and Asp225 each contribute to the Mg(2+) site. The segment at 118-246 (AASRLEARTQ…TAISAINDHG (129 aa)) is I-domain. The segment at 318–326 (VQTGLDEWI) is interaction with PCNA.

Belongs to the XPG/RAD2 endonuclease family. FEN1 subfamily. As to quaternary structure, interacts with PCNA. PCNA stimulates the nuclease activity without altering cleavage specificity. It depends on Mg(2+) as a cofactor.

Its function is as follows. Structure-specific nuclease with 5'-flap endonuclease and 5'-3' exonuclease activities involved in DNA replication and repair. During DNA replication, cleaves the 5'-overhanging flap structure that is generated by displacement synthesis when DNA polymerase encounters the 5'-end of a downstream Okazaki fragment. Binds the unpaired 3'-DNA end and kinks the DNA to facilitate 5' cleavage specificity. Cleaves one nucleotide into the double-stranded DNA from the junction in flap DNA, leaving a nick for ligation. Also involved in the base excision repair (BER) pathway. Acts as a genome stabilization factor that prevents flaps from equilibrating into structures that lead to duplications and deletions. Also possesses 5'-3' exonuclease activity on nicked or gapped double-stranded DNA. This is Flap endonuclease 1 from Haloquadratum walsbyi (strain DSM 16790 / HBSQ001).